Reading from the N-terminus, the 207-residue chain is Protein-L-isoaspartate O-methyltransferase (207 aa).

Ser-56 is an active-site residue.

Belongs to the methyltransferase superfamily. L-isoaspartyl/D-aspartyl protein methyltransferase family.

Its subcellular location is the cytoplasm. The catalysed reaction is [protein]-L-isoaspartate + S-adenosyl-L-methionine = [protein]-L-isoaspartate alpha-methyl ester + S-adenosyl-L-homocysteine. In terms of biological role, catalyzes the methyl esterification of L-isoaspartyl residues in peptides and proteins that result from spontaneous decomposition of normal L-aspartyl and L-asparaginyl residues. It plays a role in the repair and/or degradation of damaged proteins. The chain is Protein-L-isoaspartate O-methyltransferase from Pyrobaculum islandicum (strain DSM 4184 / JCM 9189 / GEO3).